Here is a 112-residue protein sequence, read N- to C-terminus: Cornifelin homolog (112 aa).

This sequence belongs to the cornifelin family.

This Danio rerio (Zebrafish) protein is Cornifelin homolog (cnfn).